The primary structure comprises 335 residues: DDRGK domain-containing protein 1 (335 aa).

Over 1–6 (MGDTYS) the chain is Lumenal. The chain crosses the membrane as a helical span at residues 7–27 (LVLVAGYLSIFLFIGAIGYFY). Topologically, residues 28 to 335 (LSKPRIPSSN…NNDQDPVDTN (308 aa)) are cytoplasmic. The tract at residues 37–124 (NVNEQQQQQQ…GEDIGVVAPG (88 aa)) is disordered. Low complexity-rich tracts occupy residues 41–56 (QQQQ…QQPQ) and 91–103 (SSGS…TNSD). The span at 104 to 117 (NYDDDNGQEGEGED) shows a compositional bias: acidic residues.

It belongs to the DDRGK1 family.

Its subcellular location is the endoplasmic reticulum membrane. In terms of biological role, substrate adapter for ufmylation, the covalent attachment of the ubiquitin-like modifier UFM1 to substrate proteins. In Dictyostelium discoideum (Social amoeba), this protein is DDRGK domain-containing protein 1.